The following is a 155-amino-acid chain: Small ribosomal subunit protein uS7c (155 aa).

It belongs to the universal ribosomal protein uS7 family. Part of the 30S ribosomal subunit.

The protein resides in the plastid. The protein localises to the chloroplast. Functionally, one of the primary rRNA binding proteins, it binds directly to 16S rRNA where it nucleates assembly of the head domain of the 30S subunit. The polypeptide is Small ribosomal subunit protein uS7c (rps7) (Saururus cernuus (Lizard's tail)).